The chain runs to 374 residues: uncharacterized protein (374 aa).

The interval 182–201 (PALGESPQGQKSSASSDKAV) is disordered. A compositionally biased stretch (polar residues) spans 188-197 (PQGQKSSASS).

This is an uncharacterized protein from Rattus norvegicus (Rat).